The chain runs to 378 residues: 23S rRNA (uracil(747)-C(5))-methyltransferase RlmC (378 aa).

[4Fe-4S] cluster-binding residues include Cys-3, Cys-11, Cys-14, and Cys-87. S-adenosyl-L-methionine is bound by residues Gln-212, Phe-241, Glu-262, and Asn-309. The active-site Nucleophile is Cys-336.

The protein belongs to the class I-like SAM-binding methyltransferase superfamily. RNA M5U methyltransferase family. RlmC subfamily.

The enzyme catalyses uridine(747) in 23S rRNA + S-adenosyl-L-methionine = 5-methyluridine(747) in 23S rRNA + S-adenosyl-L-homocysteine + H(+). Catalyzes the formation of 5-methyl-uridine at position 747 (m5U747) in 23S rRNA. The polypeptide is 23S rRNA (uracil(747)-C(5))-methyltransferase RlmC (Shewanella halifaxensis (strain HAW-EB4)).